A 494-amino-acid polypeptide reads, in one-letter code: Cytochrome P450 2A8 (494 aa).

Position 439 (C439) interacts with heme.

This sequence belongs to the cytochrome P450 family. It depends on heme as a cofactor. In terms of tissue distribution, liver.

It is found in the endoplasmic reticulum membrane. It localises to the microsome membrane. It catalyses the reaction an organic molecule + reduced [NADPH--hemoprotein reductase] + O2 = an alcohol + oxidized [NADPH--hemoprotein reductase] + H2O + H(+). Highly active in 7-ethoxycoumarin O-deethylation, and benzphetamine N-demethylation; moderately active in testosterone 7-alpha-hydroxylation, ethylmorphine N-demethylation, p-nitroanisole O-demethylation; and only slightly active in benzopyrene 3-hydroxylation, 7-ethoxyresorufin O-deethylation, testosterone 2-alpha-hydroxylation and testosterone 17-oxidation. Competent in the metabolic activation of aflatoxin B1. This Mesocricetus auratus (Golden hamster) protein is Cytochrome P450 2A8 (CYP2A8).